Reading from the N-terminus, the 281-residue chain is Sulfur carrier protein FdhD (281 aa).

The Cysteine persulfide intermediate role is filled by Cys-117.

Belongs to the FdhD family.

The protein resides in the cytoplasm. Functionally, required for formate dehydrogenase (FDH) activity. Acts as a sulfur carrier protein that transfers sulfur from IscS to the molybdenum cofactor prior to its insertion into FDH. In Xanthomonas axonopodis pv. citri (strain 306), this protein is Sulfur carrier protein FdhD.